The following is a 156-amino-acid chain: Transcriptional repressor NrdR (156 aa).

The segment at 3-34 (CPFCQHGHSRVIDSRVIEAGSAIRRRRECSQC) is a zinc-finger region. In terms of domain architecture, ATP-cone spans 46–136 (LLVLKRNGVT…VYKSFESADD (91 aa)).

It belongs to the NrdR family. Zn(2+) serves as cofactor.

Negatively regulates transcription of bacterial ribonucleotide reductase nrd genes and operons by binding to NrdR-boxes. The polypeptide is Transcriptional repressor NrdR (Corynebacterium efficiens (strain DSM 44549 / YS-314 / AJ 12310 / JCM 11189 / NBRC 100395)).